The chain runs to 370 residues: Dihydroorotate dehydrogenase (quinone) (370 aa).

FMN-binding positions include 67-71 (AGFDK) and T91. K71 contacts substrate. 116–120 (NRMGF) lines the substrate pocket. Positions 146 and 179 each coordinate FMN. N179 contributes to the substrate binding site. Catalysis depends on S182, which acts as the Nucleophile. N184 provides a ligand contact to substrate. Positions 222 and 250 each coordinate FMN. 251–252 (NT) contributes to the substrate binding site. FMN-binding positions include G276, G305, and 326-327 (YS).

The protein belongs to the dihydroorotate dehydrogenase family. Type 2 subfamily. In terms of assembly, monomer. FMN serves as cofactor.

Its subcellular location is the cell membrane. The catalysed reaction is (S)-dihydroorotate + a quinone = orotate + a quinol. It participates in pyrimidine metabolism; UMP biosynthesis via de novo pathway; orotate from (S)-dihydroorotate (quinone route): step 1/1. Catalyzes the conversion of dihydroorotate to orotate with quinone as electron acceptor. The sequence is that of Dihydroorotate dehydrogenase (quinone) from Streptomyces griseus subsp. griseus (strain JCM 4626 / CBS 651.72 / NBRC 13350 / KCC S-0626 / ISP 5235).